A 273-amino-acid chain; its full sequence is Nitrogenase iron protein (273 aa).

Residue 8-15 (GKGGIGKS) coordinates ATP. Cys-95 lines the [4Fe-4S] cluster pocket. An ADP-ribosylarginine; by dinitrogenase reductase ADP-ribosyltransferase modification is found at Arg-98. A [4Fe-4S] cluster-binding site is contributed by Cys-130.

The protein belongs to the NifH/BchL/ChlL family. In terms of assembly, homodimer. [4Fe-4S] cluster is required as a cofactor. The reversible ADP-ribosylation of Arg-98 inactivates the nitrogenase reductase and regulates nitrogenase activity.

The enzyme catalyses N2 + 8 reduced [2Fe-2S]-[ferredoxin] + 16 ATP + 16 H2O = H2 + 8 oxidized [2Fe-2S]-[ferredoxin] + 2 NH4(+) + 16 ADP + 16 phosphate + 6 H(+). Its function is as follows. The key enzymatic reactions in nitrogen fixation are catalyzed by the nitrogenase complex, which has 2 components: the iron protein and the molybdenum-iron protein. The polypeptide is Nitrogenase iron protein (Methanosarcina mazei (strain ATCC BAA-159 / DSM 3647 / Goe1 / Go1 / JCM 11833 / OCM 88) (Methanosarcina frisia)).